The primary structure comprises 225 residues: Peptidyl-prolyl cis-trans isomerase D (225 aa).

Residues 1–22 (MKLQFFSFITLFACLFTTAIFA) form the signal peptide. A PPIase cyclophilin-type domain is found at 37–195 (YFDINHGDKQ…KEVIIVESGE (159 aa)). An N-linked (GlcNAc...) asparagine glycan is attached at N139. Residues 222-225 (HDEL) carry the Prevents secretion from ER motif.

The protein belongs to the cyclophilin-type PPIase family. PPIase B subfamily.

It localises to the endoplasmic reticulum lumen. The enzyme catalyses [protein]-peptidylproline (omega=180) = [protein]-peptidylproline (omega=0). In terms of biological role, PPIases accelerate the folding of proteins. It catalyzes the cis-trans isomerization of proline imidic peptide bonds in oligopeptides. This Saccharomyces cerevisiae (strain ATCC 204508 / S288c) (Baker's yeast) protein is Peptidyl-prolyl cis-trans isomerase D.